We begin with the raw amino-acid sequence, 928 residues long: DNA mismatch repair protein MutS (928 aa).

613 to 620 (GPNMAGKS) is a binding site for ATP. The segment covering 854-872 (KAKSNKDDHRIDEKTENSS) has biased composition (basic and acidic residues). A disordered region spans residues 854 to 880 (KAKSNKDDHRIDEKTENSSKKHKNKDS).

It belongs to the DNA mismatch repair MutS family.

In terms of biological role, this protein is involved in the repair of mismatches in DNA. It is possible that it carries out the mismatch recognition step. This protein has a weak ATPase activity. This is DNA mismatch repair protein MutS from Clostridium beijerinckii (strain ATCC 51743 / NCIMB 8052) (Clostridium acetobutylicum).